A 48-amino-acid polypeptide reads, in one-letter code: MTNKNDSKDMRKNVSKGDNPGQPEPLDGSKKVKNRNHTRQKHNTSHDM.

A compositionally biased stretch (basic and acidic residues) spans 1 to 12 (MTNKNDSKDMRK). The interval 1–48 (MTNKNDSKDMRKNVSKGDNPGQPEPLDGSKKVKNRNHTRQKHNTSHDM) is disordered. Positions 31-48 (KVKNRNHTRQKHNTSHDM) are enriched in basic residues.

The protein belongs to the SspP family.

The protein resides in the spore core. The polypeptide is Small, acid-soluble spore protein P (Geobacillus thermodenitrificans (strain NG80-2)).